Reading from the N-terminus, the 344-residue chain is tRNA dimethylallyltransferase (344 aa).

19–26 contributes to the ATP binding site; the sequence is GPTASGKT. A substrate-binding site is contributed by 21–26; it reads TASGKT.

Belongs to the IPP transferase family. As to quaternary structure, monomer. Mg(2+) serves as cofactor.

The enzyme catalyses adenosine(37) in tRNA + dimethylallyl diphosphate = N(6)-dimethylallyladenosine(37) in tRNA + diphosphate. Catalyzes the transfer of a dimethylallyl group onto the adenine at position 37 in tRNAs that read codons beginning with uridine, leading to the formation of N6-(dimethylallyl)adenosine (i(6)A). This chain is tRNA dimethylallyltransferase, found in Bifidobacterium animalis subsp. lactis (strain AD011).